Reading from the N-terminus, the 595-residue chain is Aspartate--tRNA(Asp/Asn) ligase (595 aa).

An L-aspartate-binding site is contributed by E174. Positions 198–201 are aspartate; sequence QLFK. R220 is an L-aspartate binding site. Residues 220 to 222 and Q229 each bind ATP; that span reads RDE. H456 contacts L-aspartate. E486 provides a ligand contact to ATP. R493 provides a ligand contact to L-aspartate. ATP is bound at residue 538–541; it reads GFDR.

Belongs to the class-II aminoacyl-tRNA synthetase family. Type 1 subfamily. In terms of assembly, homodimer.

It localises to the cytoplasm. The catalysed reaction is tRNA(Asx) + L-aspartate + ATP = L-aspartyl-tRNA(Asx) + AMP + diphosphate. Functionally, aspartyl-tRNA synthetase with relaxed tRNA specificity since it is able to aspartylate not only its cognate tRNA(Asp) but also tRNA(Asn). Reaction proceeds in two steps: L-aspartate is first activated by ATP to form Asp-AMP and then transferred to the acceptor end of tRNA(Asp/Asn). The protein is Aspartate--tRNA(Asp/Asn) ligase of Gloeobacter violaceus (strain ATCC 29082 / PCC 7421).